We begin with the raw amino-acid sequence, 159 residues long: Ribosome maturation factor RimP (159 aa).

Belongs to the RimP family.

It localises to the cytoplasm. Functionally, required for maturation of 30S ribosomal subunits. The polypeptide is Ribosome maturation factor RimP (Bordetella avium (strain 197N)).